Consider the following 122-residue polypeptide: Ribosome-binding factor A (122 aa).

It belongs to the RbfA family. As to quaternary structure, monomer. Binds 30S ribosomal subunits, but not 50S ribosomal subunits or 70S ribosomes.

It localises to the cytoplasm. One of several proteins that assist in the late maturation steps of the functional core of the 30S ribosomal subunit. Associates with free 30S ribosomal subunits (but not with 30S subunits that are part of 70S ribosomes or polysomes). Required for efficient processing of 16S rRNA. May interact with the 5'-terminal helix region of 16S rRNA. The sequence is that of Ribosome-binding factor A from Anaeromyxobacter sp. (strain Fw109-5).